The sequence spans 466 residues: 3-isopropylmalate dehydratase large subunit (466 aa).

The [4Fe-4S] cluster site is built by cysteine 347, cysteine 407, and cysteine 410.

It belongs to the aconitase/IPM isomerase family. LeuC type 1 subfamily. As to quaternary structure, heterodimer of LeuC and LeuD. [4Fe-4S] cluster is required as a cofactor.

It catalyses the reaction (2R,3S)-3-isopropylmalate = (2S)-2-isopropylmalate. Its pathway is amino-acid biosynthesis; L-leucine biosynthesis; L-leucine from 3-methyl-2-oxobutanoate: step 2/4. Its function is as follows. Catalyzes the isomerization between 2-isopropylmalate and 3-isopropylmalate, via the formation of 2-isopropylmaleate. The chain is 3-isopropylmalate dehydratase large subunit from Shigella flexneri serotype 5b (strain 8401).